We begin with the raw amino-acid sequence, 88 residues long: Small ribosomal subunit protein bS20 (88 aa).

Belongs to the bacterial ribosomal protein bS20 family.

In terms of biological role, binds directly to 16S ribosomal RNA. The polypeptide is Small ribosomal subunit protein bS20 (Bacillus licheniformis (strain ATCC 14580 / DSM 13 / JCM 2505 / CCUG 7422 / NBRC 12200 / NCIMB 9375 / NCTC 10341 / NRRL NRS-1264 / Gibson 46)).